Reading from the N-terminus, the 301-residue chain is Probable alpha-L-glutamate ligase 1 (301 aa).

The region spanning 104–287 (MQLMSRRGIG…VAGAIIEFVE (184 aa)) is the ATP-grasp domain. Residues K141, 178–179 (EY), D187, and 211–213 (RSN) contribute to the ATP site. Mg(2+) contacts are provided by D248, E260, and N262. The Mn(2+) site is built by D248, E260, and N262.

This sequence belongs to the RimK family. Mg(2+) is required as a cofactor. Mn(2+) serves as cofactor.

The sequence is that of Probable alpha-L-glutamate ligase 1 from Shewanella putrefaciens (strain CN-32 / ATCC BAA-453).